The chain runs to 574 residues: Probable inactive serine/threonine-protein kinase slob2 (574 aa).

A helical membrane pass occupies residues 6–26 (YIIIAAVGGFAILTFIIIVVL). The region spanning 166–346 (YADRGSLRDF…PLHRLTYTSR (181 aa)) is the Protein kinase domain. Residue Asn-358 is glycosylated (N-linked (GlcNAc...) asparagine). Positions 366 to 386 (SKPNSKDLSQPKLKDLKKQKK) are disordered. N-linked (GlcNAc...) asparagine glycans are attached at residues Asn-440, Asn-449, Asn-453, Asn-456, Asn-464, Asn-470, Asn-477, and Asn-483. Residues 450-493 (TTTNTTNTSTSSSLNSSFNSNVSTSYSNATTTTNTTSASSVSPP) are compositionally biased toward low complexity. Residues 450 to 574 (TTTNTTNTST…DKSGPLLKKS (125 aa)) are disordered. The segment covering 494 to 539 (ISSPPPPPPPPPPSKSSGPPPPPPPPPKSSGPPPPPPPKSSPPPPA) has biased composition (pro residues). Residues 546–556 (LLSSIESFSSS) are compositionally biased toward low complexity.

It belongs to the protein kinase superfamily. Ser/Thr protein kinase family.

The protein resides in the membrane. This Dictyostelium discoideum (Social amoeba) protein is Probable inactive serine/threonine-protein kinase slob2 (slob2).